Reading from the N-terminus, the 267-residue chain is Tryptophan synthase alpha chain (267 aa).

Catalysis depends on proton acceptor residues Glu47 and Asp58.

This sequence belongs to the TrpA family. Tetramer of two alpha and two beta chains.

It carries out the reaction (1S,2R)-1-C-(indol-3-yl)glycerol 3-phosphate + L-serine = D-glyceraldehyde 3-phosphate + L-tryptophan + H2O. It participates in amino-acid biosynthesis; L-tryptophan biosynthesis; L-tryptophan from chorismate: step 5/5. The alpha subunit is responsible for the aldol cleavage of indoleglycerol phosphate to indole and glyceraldehyde 3-phosphate. The polypeptide is Tryptophan synthase alpha chain (Chlorobium phaeobacteroides (strain DSM 266 / SMG 266 / 2430)).